The sequence spans 1342 residues: DNA-directed RNA polymerase subunit beta (1342 aa).

The protein belongs to the RNA polymerase beta chain family. In terms of assembly, the RNAP catalytic core consists of 2 alpha, 1 beta, 1 beta' and 1 omega subunit. When a sigma factor is associated with the core the holoenzyme is formed, which can initiate transcription.

It carries out the reaction RNA(n) + a ribonucleoside 5'-triphosphate = RNA(n+1) + diphosphate. DNA-dependent RNA polymerase catalyzes the transcription of DNA into RNA using the four ribonucleoside triphosphates as substrates. The chain is DNA-directed RNA polymerase subunit beta from Yersinia enterocolitica serotype O:8 / biotype 1B (strain NCTC 13174 / 8081).